The following is a 608-amino-acid chain: Formate hydrogenlyase subunit 3 (608 aa).

The next 12 helical transmembrane spans lie at 10–26 (GVAW…LFSF), 44–67 (LYTA…LSLV), 76–93 (LNAI…FVSL), 116–140 (AAAV…MALC), 153–173 (LWFA…WLLW), 197–218 (IWLL…HGWV), 229–251 (AAAL…LSLL), 258–280 (WWGI…YALV), 296–312 (IGII…GIAL), 416–440 (LAVG…VTFL), 453–476 (CAPL…GVAA), and 502–521 (MITL…MAIC).

It belongs to the complex I subunit 4 family. As to quaternary structure, FHL comprises of a formate dehydrogenase, unidentified electron carriers and a hydrogenase (isoenzyme 3). In this non-energy conserving pathway molecular hydrogen and carbodioxide from formate are released.

It is found in the cell inner membrane. The protein is Formate hydrogenlyase subunit 3 (hycC) of Escherichia coli (strain K12).